The primary structure comprises 469 residues: 3-isopropylmalate dehydratase large subunit (469 aa).

[4Fe-4S] cluster-binding residues include cysteine 347, cysteine 410, and cysteine 413.

It belongs to the aconitase/IPM isomerase family. LeuC type 1 subfamily. As to quaternary structure, heterodimer of LeuC and LeuD. It depends on [4Fe-4S] cluster as a cofactor.

The catalysed reaction is (2R,3S)-3-isopropylmalate = (2S)-2-isopropylmalate. It participates in amino-acid biosynthesis; L-leucine biosynthesis; L-leucine from 3-methyl-2-oxobutanoate: step 2/4. Its function is as follows. Catalyzes the isomerization between 2-isopropylmalate and 3-isopropylmalate, via the formation of 2-isopropylmaleate. In Burkholderia ambifaria (strain MC40-6), this protein is 3-isopropylmalate dehydratase large subunit.